A 250-amino-acid polypeptide reads, in one-letter code: 3-deoxy-manno-octulosonate cytidylyltransferase (250 aa).

Belongs to the KdsB family.

The protein localises to the cytoplasm. It catalyses the reaction 3-deoxy-alpha-D-manno-oct-2-ulosonate + CTP = CMP-3-deoxy-beta-D-manno-octulosonate + diphosphate. The protein operates within nucleotide-sugar biosynthesis; CMP-3-deoxy-D-manno-octulosonate biosynthesis; CMP-3-deoxy-D-manno-octulosonate from 3-deoxy-D-manno-octulosonate and CTP: step 1/1. It participates in bacterial outer membrane biogenesis; lipopolysaccharide biosynthesis. Functionally, activates KDO (a required 8-carbon sugar) for incorporation into bacterial lipopolysaccharide in Gram-negative bacteria. This chain is 3-deoxy-manno-octulosonate cytidylyltransferase, found in Francisella philomiragia subsp. philomiragia (strain ATCC 25017 / CCUG 19701 / FSC 153 / O#319-036).